The following is an 828-amino-acid chain: Glycerol-3-phosphate acyltransferase 1, mitochondrial (828 aa).

At 1–87 (MEESSVTIGT…FFNPSIPSLG (87 aa)) the chain is on the cytoplasmic side. An important for mitochondrial localization region spans residues 80 to 120 (NPSIPSLGLRNVIYINETHTRHRGWLARRLSYILFVQERDV). Residues 88–118 (LRNVIYINETHTRHRGWLARRLSYILFVQER) lie within the membrane without spanning it. Residues 119-828 (DVHKGMFATS…LEYILSFVVL (710 aa)) lie on the Cytoplasmic side of the membrane. The short motif at 230 to 235 (HRSHID) is the HXXXXD motif element. The CoA site is built by Arg-278, Arg-279, Lys-288, Arg-293, and Arg-328. Ser-380 is modified (phosphoserine). A CoA-binding site is contributed by Arg-462. Phosphoserine occurs at positions 688 and 695. N6-acetyllysine occurs at positions 780 and 784.

This sequence belongs to the GPAT/DAPAT family.

It is found in the mitochondrion outer membrane. It catalyses the reaction sn-glycerol 3-phosphate + an acyl-CoA = a 1-acyl-sn-glycero-3-phosphate + CoA. It carries out the reaction sn-glycerol 3-phosphate + hexadecanoyl-CoA = 1-hexadecanoyl-sn-glycero-3-phosphate + CoA. The catalysed reaction is (9Z,12Z)-octadecadienoyl-CoA + sn-glycerol 3-phosphate = 1-(9Z,12Z)-octadecadienoyl-sn-glycero-3-phosphate + CoA. The enzyme catalyses sn-glycerol 3-phosphate + (9Z)-octadecenoyl-CoA = 1-(9Z-octadecenoyl)-sn-glycero-3-phosphate + CoA. It catalyses the reaction sn-glycerol 3-phosphate + octadecanoyl-CoA = 1-octadecanoyl-sn-glycero-3-phosphate + CoA. It carries out the reaction dodecanoyl-CoA + sn-glycerol 3-phosphate = 1-dodecanoyl-sn-glycerol 3-phosphate + CoA. The catalysed reaction is 1-acyl-sn-glycero-3-phospho-(1'-sn-glycerol) + an acyl-CoA = a 1,2-diacyl-sn-glycero-3-phospho-(1'-sn-glycerol) + CoA. Its pathway is phospholipid metabolism; CDP-diacylglycerol biosynthesis; CDP-diacylglycerol from sn-glycerol 3-phosphate: step 1/3. Functionally, mitochondrial membrane protein that catalyzes the essential first step of biosynthesis of glycerolipids such as triglycerides, phosphatidic acids and lysophosphatidic acids. Esterifies acyl-group from acyl-coenzyme A (acyl-CoA) to the sn-1 position of glycerol-3-phosphate, to produce lysophosphatidic acid. Has a narrow hydrophobic binding cleft that selects for a linear acyl chain. Catalytic activity is higher for substrates with a 16-carbon acyl chain. This Rattus norvegicus (Rat) protein is Glycerol-3-phosphate acyltransferase 1, mitochondrial.